Here is a 416-residue protein sequence, read N- to C-terminus: CCA-adding enzyme (416 aa).

ATP contacts are provided by Ser-42 and Lys-45. Positions 42 and 45 each coordinate CTP. Mg(2+) is bound by residues Asp-54, Asp-56, and Asp-107. ATP is bound by residues His-130, Lys-150, and Tyr-159. 3 residues coordinate CTP: His-130, Lys-150, and Tyr-159.

It belongs to the tRNA nucleotidyltransferase/poly(A) polymerase family. Archaeal CCA-adding enzyme subfamily. In terms of assembly, homodimer. Requires Mg(2+) as cofactor.

It catalyses the reaction a tRNA precursor + 2 CTP + ATP = a tRNA with a 3' CCA end + 3 diphosphate. The enzyme catalyses a tRNA with a 3' CCA end + 2 CTP + ATP = a tRNA with a 3' CCACCA end + 3 diphosphate. Catalyzes the addition and repair of the essential 3'-terminal CCA sequence in tRNAs without using a nucleic acid template. Adds these three nucleotides in the order of C, C, and A to the tRNA nucleotide-73, using CTP and ATP as substrates and producing inorganic pyrophosphate. tRNA 3'-terminal CCA addition is required both for tRNA processing and repair. Also involved in tRNA surveillance by mediating tandem CCA addition to generate a CCACCA at the 3' terminus of unstable tRNAs. While stable tRNAs receive only 3'-terminal CCA, unstable tRNAs are marked with CCACCA and rapidly degraded. This Sulfolobus acidocaldarius (strain ATCC 33909 / DSM 639 / JCM 8929 / NBRC 15157 / NCIMB 11770) protein is CCA-adding enzyme.